The following is a 113-amino-acid chain: Hydrogenase maturation factor HybF (113 aa).

H2 and E3 together coordinate Ni(2+). C73, C76, C89, and C92 together coordinate Zn(2+).

The protein belongs to the HypA/HybF family. HybF subfamily.

Functionally, involved in the maturation of [NiFe] hydrogenases. Required for nickel insertion into the metal center of the hydrogenase. The chain is Hydrogenase maturation factor HybF from Proteus vulgaris.